The sequence spans 187 residues: F-box protein At5g41720 (187 aa).

In terms of domain architecture, F-box spans 2–49 (MMNSPLDYDVLLEIMSYCPATEMAKFRLLSKECNKRSYEMSFINRHLH).

The chain is F-box protein At5g41720 from Arabidopsis thaliana (Mouse-ear cress).